The chain runs to 129 residues: Small ribosomal subunit protein uS11 (129 aa).

The protein belongs to the universal ribosomal protein uS11 family. Part of the 30S ribosomal subunit. Interacts with proteins S7 and S18. Binds to IF-3.

In terms of biological role, located on the platform of the 30S subunit, it bridges several disparate RNA helices of the 16S rRNA. Forms part of the Shine-Dalgarno cleft in the 70S ribosome. The polypeptide is Small ribosomal subunit protein uS11 (Bartonella henselae (strain ATCC 49882 / DSM 28221 / CCUG 30454 / Houston 1) (Rochalimaea henselae)).